A 216-amino-acid polypeptide reads, in one-letter code: Enolase-phosphatase E1 (216 aa).

2 residues coordinate Mg(2+): aspartate 8 and glutamate 10. Substrate-binding positions include 115 to 116 and lysine 149; that span reads SS. Position 172 (aspartate 172) interacts with Mg(2+).

The protein belongs to the HAD-like hydrolase superfamily. MasA/MtnC family. As to quaternary structure, monomer. Mg(2+) serves as cofactor.

The protein resides in the cytoplasm. It is found in the nucleus. It catalyses the reaction 5-methylsulfanyl-2,3-dioxopentyl phosphate + H2O = 1,2-dihydroxy-5-(methylsulfanyl)pent-1-en-3-one + phosphate. It functions in the pathway amino-acid biosynthesis; L-methionine biosynthesis via salvage pathway; L-methionine from S-methyl-5-thio-alpha-D-ribose 1-phosphate: step 3/6. Its pathway is amino-acid biosynthesis; L-methionine biosynthesis via salvage pathway; L-methionine from S-methyl-5-thio-alpha-D-ribose 1-phosphate: step 4/6. Bifunctional enzyme that catalyzes the enolization of 2,3-diketo-5-methylthiopentyl-1-phosphate (DK-MTP-1-P) into the intermediate 2-hydroxy-3-keto-5-methylthiopentenyl-1-phosphate (HK-MTPenyl-1-P), which is then dephosphorylated to form the acireductone 1,2-dihydroxy-3-keto-5-methylthiopentene (DHK-MTPene). In Schizosaccharomyces pombe (strain 972 / ATCC 24843) (Fission yeast), this protein is Enolase-phosphatase E1 (utr4).